The sequence spans 280 residues: Antiactivator FleN (280 aa).

ATP contacts are provided by residues 19-26 (KGGVGKTN), Glu-153, Asn-181, 215-217 (PYD), and Arg-221.

It belongs to the ParA family. As to quaternary structure, forms homodimers. Interacts with FleQ.

Its activity is regulated as follows. ATP-binding allows dimerization and subsequent antagonistic effect against FleQ. ATPase that plays an important role in maintaining flagellar number in Pseudomonas aeruginosa. Exhibits anti-activator activity against FleQ, the global transcriptional regulator of flagellar genes. The protein is Antiactivator FleN of Pseudomonas aeruginosa (strain ATCC 15692 / DSM 22644 / CIP 104116 / JCM 14847 / LMG 12228 / 1C / PRS 101 / PAO1).